Consider the following 540-residue polypeptide: Lysosomal cobalamin transport escort protein LMBD1 (540 aa).

Over 1–10 the chain is Extracellular; it reads MATSGAASAE. Residues 11-31 traverse the membrane as a helical segment; the sequence is LVIGWCIFGLLLLAILAFCWI. The Cytoplasmic portion of the chain corresponds to 32–50; the sequence is YVRKYQSRRESEVVSTITA. A helical transmembrane segment spans residues 51-71; the sequence is IFSLAIALITSALLPVDIFLV. The Extracellular portion of the chain corresponds to 72-100; that stretch reads SYMKNQNGTFKDWANANVSRQIEDTVLYG. Residues asparagine 78 and asparagine 88 are each glycosylated (N-linked (GlcNAc...) asparagine). The chain crosses the membrane as a helical span at residues 101–121; that stretch reads YYTLYSVILFCVFFWIPFVYF. Residues 122–144 lie on the Cytoplasmic side of the membrane; it reads YYEEKDDDDTSKCTQIKTALKYT. Residues 145–165 traverse the membrane as a helical segment; the sequence is LGFVVICALLLLVGAFVPLNV. Residues 166 to 188 lie on the Extracellular side of the membrane; it reads PNNKNSTEWEKVKSLFEELGSSH. Asparagine 170 is a glycosylation site (N-linked (GlcNAc...) asparagine). Residues 189 to 209 form a helical membrane-spanning segment; the sequence is GLAALSFSISSLTLIGMLAAI. The Cytoplasmic segment spans residues 210 to 305; the sequence is TYTAYGMSAL…KFCGALRPLK (96 aa). Positions 232 to 235 match the YERL motif; mediates interaction with adapter protein complex 2 and is essential for its function in clathrin-mediated endocytosis of INSR motif; sequence YERL. The residue at position 238 (threonine 238) is a Phosphothreonine. Residues 294–297 carry the WTKF motif; mediates interaction with adapter protein complex 2 and is essential for its function in clathrin-mediated endocytosis of INSR motif; the sequence is WTKF. The helical transmembrane segment at 306–326 threads the bilayer; the sequence is IVWGIFFILVALLFVISLFLS. The Extracellular segment spans residues 327-364; it reads NLDKALHSAGIDSGFIIFGANLSNPLNMLLPLLQTVFP. N-linked (GlcNAc...) asparagine glycosylation is present at asparagine 347. Residues 365-385 traverse the membrane as a helical segment; that stretch reads LDYILITIIIMYFIFTSMAGI. The Cytoplasmic segment spans residues 386–408; sequence RNIGIWFFWIRLYKIRRGRTRPQ. A helical transmembrane segment spans residues 409–429; the sequence is ALLFLCMILLLIVLHTSYMIY. Over 430 to 486 the chain is Extracellular; sequence SLAPQYVMYGSQNYLIETNITSDNHKGNSTLSVPKRCDADAPEDQCTVTRTYLFLHK. N-linked (GlcNAc...) asparagine glycosylation is found at asparagine 448 and asparagine 457. The chain crosses the membrane as a helical span at residues 487-507; it reads FWFFSAAYYFGNWAFLGVFLI. Residues 508-540 are Cytoplasmic-facing; sequence GLIVSCCKGKKSVIEGVDEDSDISDDEPSVYSA. Serine 528 and serine 531 each carry phosphoserine.

It belongs to the LIMR family. LMBRD1 subfamily. In terms of assembly, (Microbial infection) Interacts with hepatitis delta virus NES (HDAg-L). Interacts with ABCD4; this interaction induces the translocation of ABCD4 from the endoplasmic reticulum to the lysosome. Interacts with ABCD4 and MMACHC; this interaction ensures the transport of cobalamin from the lysosome to the cytoplasm. Interacts with INSR, adapter protein complex 2 and clathrin heavy chain. N-glycosylated. As to expression, isoform 3 is expressed in liver.

It localises to the endoplasmic reticulum membrane. The protein resides in the lysosome membrane. It is found in the cell membrane. Its subcellular location is the cytoplasmic vesicle. The protein localises to the clathrin-coated vesicle. Its function is as follows. Lysosomal membrane chaperone required to export cobalamin (vitamin B12) from the lysosome to the cytosol, allowing its conversion to cofactors. Targets ABCD4 transporter from the endoplasmic reticulum to the lysosome. Then forms a complex with lysosomal ABCD4 and cytoplasmic MMACHC to transport cobalamin across the lysosomal membrane. Acts as an adapter protein which plays an important role in mediating and regulating the internalization of the insulin receptor (INSR). Involved in clathrin-mediated endocytosis of INSR via its interaction with adapter protein complex 2. Essential for the initiation of gastrulation and early formation of mesoderm structures during embryogenesis. In terms of biological role, (Microbial infection) May play a role in the assembly of hepatitis delta virus (HDV). This Homo sapiens (Human) protein is Lysosomal cobalamin transport escort protein LMBD1.